The chain runs to 769 residues: Serine/threonine-protein kinase PLK4 (769 aa).

Residues 14 to 267 form the Protein kinase domain; it reads YEVQHLLGKG…LEAVLCHPFM (254 aa). Residues 20–28 and lysine 43 contribute to the ATP site; that span reads LGKGGFATV. Residue aspartate 138 is the Proton acceptor of the active site. Positions 381-498 constitute a Cryptic POLO box 1 (CPB1) domain; the sequence is EDRISVPPLN…ARFVGLVKSK (118 aa). The Cryptic POLO box 2 (CPB2) domain maps to 499–602; the sequence is TPKVTYFSTL…GRRPITDVQP (104 aa). A POLO box domain is found at 660–739; that stretch reads PIKRINVPEI…IPNIQLKLKT (80 aa).

It belongs to the protein kinase superfamily. Ser/Thr protein kinase family. CDC5/Polo subfamily. As to quaternary structure, homodimer. Interacts with Alms1a. Post-translationally, ubiquitinated by the SCF-slmb ubiquitin ligase complex; leading to its degradation by the proteasome during interphase and regulating centriole number and ensuring the block to centriole reduplication. As to expression, expressed in testis (at protein level).

The protein localises to the cytoplasm. Its subcellular location is the cytoskeleton. The protein resides in the microtubule organizing center. It is found in the centrosome. It localises to the centriole. The enzyme catalyses L-seryl-[protein] + ATP = O-phospho-L-seryl-[protein] + ADP + H(+). The catalysed reaction is L-threonyl-[protein] + ATP = O-phospho-L-threonyl-[protein] + ADP + H(+). Functionally, serine/threonine-protein kinase that plays a central role in centriole duplication. Able to trigger procentriole formation on the surface of the mother centriole cylinder, using mother centriole as a platform, leading to the recruitment of centriole biogenesis proteins such as Sas-6. When overexpressed, it is able to induce centrosome amplification through the simultaneous generation of multiple procentrioles adjoining each parental centriole during S phase. Centrosome amplification following overexpression can initiate tumorigenesis, highlighting the importance of centrosome regulation in cancers. The polypeptide is Serine/threonine-protein kinase PLK4 (SAK) (Drosophila melanogaster (Fruit fly)).